Reading from the N-terminus, the 419-residue chain is eIF5-mimic protein 1 (419 aa).

The segment at 1–22 (MNKHQKPVLTGQRFKTRKRDEK) is disordered. Position 117 is an N6-acetyllysine (lysine 117). Residues 248 to 415 (VQQSLGTRKE…QNAEEESESE (168 aa)) enclose the W2 domain. A phosphoserine mark is found at serine 412 and serine 414.

This sequence belongs to the BZW family. Interacts with EIF3E, EIF2S2 and EIF3C.

The protein resides in the cytoplasm. In terms of biological role, translation initiation regulator which represses non-AUG initiated translation and repeat-associated non-AUG (RAN) initiated translation by acting as a competitive inhibitor of eukaryotic translation initiation factor 5 (EIF5) function. Increases the accuracy of translation initiation by impeding EIF5-dependent translation from non-AUG codons by competing with it for interaction with EIF2S2 within the 43S pre-initiation complex (PIC) in an EIF3C-binding dependent manner. This chain is eIF5-mimic protein 1 (BZW2), found in Macaca fascicularis (Crab-eating macaque).